Consider the following 578-residue polypeptide: A-type ATP synthase subunit A (578 aa).

An ATP-binding site is contributed by Gly228–Thr235.

It belongs to the ATPase alpha/beta chains family. As to quaternary structure, has multiple subunits with at least A(3), B(3), C, D, E, F, H, I and proteolipid K(x).

The protein resides in the cell membrane. It catalyses the reaction ATP + H2O + 4 H(+)(in) = ADP + phosphate + 5 H(+)(out). Functionally, produces ATP from ADP in the presence of a proton gradient across the membrane. The archaeal alpha chain is a catalytic subunit. Its function is as follows. Component of the A-type ATP synthase that produces ATP from ADP in the presence of a proton gradient across the membrane. The A chain is the catalytic subunit. This is A-type ATP synthase subunit A from Methanosarcina barkeri.